Here is a 427-residue protein sequence, read N- to C-terminus: MLDIKWIRENAGVLDNALAKRGAEPLSASLIALDERRRTVLQSLQEMQSRRNAASKEIGAAMAQKNSELAEKLKAEVAELKDALPAAEEESRRMEAELTDILSRIPNVPLEDVPVGPDESGNVVKRLVGSKPTWNHKPLEHFEIGEGLGFMDFEGAARIAGSRFTILKGQLARLERALGQFMLDLHTQEHGYIEVQPPLLVRDDAMYGTGQLPKFAEDLFRTTDGRWLIPTAEVPLTNMVREQILEGEKLPLRFTALTPCFRSEAGSAGRDTRGMLRQHQFNKVELVSLTDAETSVDEHERMTACAEEVLKRLGLHYRVMTLCTGDMGFGARKTYDLEVWLPGQDAYREISSCSVCGDFQARRMNARYRSKEEKGTKFVHTLNGSGVAVGRALIAVIENYLNEDGSVSVPEVLVPYMGGLRRVEKAA.

231–233 contacts L-serine; sequence TAE. 262–264 is a binding site for ATP; the sequence is RSE. Glutamate 285 contacts L-serine. 349 to 352 serves as a coordination point for ATP; it reads EISS. Serine 385 serves as a coordination point for L-serine.

It belongs to the class-II aminoacyl-tRNA synthetase family. Type-1 seryl-tRNA synthetase subfamily. As to quaternary structure, homodimer. The tRNA molecule binds across the dimer.

The protein localises to the cytoplasm. The catalysed reaction is tRNA(Ser) + L-serine + ATP = L-seryl-tRNA(Ser) + AMP + diphosphate + H(+). It catalyses the reaction tRNA(Sec) + L-serine + ATP = L-seryl-tRNA(Sec) + AMP + diphosphate + H(+). Its pathway is aminoacyl-tRNA biosynthesis; selenocysteinyl-tRNA(Sec) biosynthesis; L-seryl-tRNA(Sec) from L-serine and tRNA(Sec): step 1/1. Catalyzes the attachment of serine to tRNA(Ser). Is also able to aminoacylate tRNA(Sec) with serine, to form the misacylated tRNA L-seryl-tRNA(Sec), which will be further converted into selenocysteinyl-tRNA(Sec). The sequence is that of Serine--tRNA ligase from Sinorhizobium fredii (strain NBRC 101917 / NGR234).